The sequence spans 166 residues: uncharacterized protein (166 aa).

To B.subtilis YpjQ.

This is an uncharacterized protein from Bacillus subtilis (strain 168).